The chain runs to 121 residues: Large ribosomal subunit protein bL12 (121 aa).

The protein belongs to the bacterial ribosomal protein bL12 family. As to quaternary structure, homodimer. Part of the ribosomal stalk of the 50S ribosomal subunit. Forms a multimeric L10(L12)X complex, where L10 forms an elongated spine to which 2 to 4 L12 dimers bind in a sequential fashion. Binds GTP-bound translation factors.

Functionally, forms part of the ribosomal stalk which helps the ribosome interact with GTP-bound translation factors. Is thus essential for accurate translation. This is Large ribosomal subunit protein bL12 from Limosilactobacillus fermentum (strain NBRC 3956 / LMG 18251) (Lactobacillus fermentum).